A 78-amino-acid polypeptide reads, in one-letter code: Calcium/calmodulin-dependent protein kinase II inhibitor 1 (78 aa).

Residues Asn41–Lys68 form a CAMK2 inhibitory domain region.

Belongs to the CAMK2N family. In terms of assembly, interacts with CAMK2B; the presence of Ca(2+)/calmodulin increases the interaction but is not essential. Interacts with CAMK2A; this interaction requires CAMK2A activation by Ca(2+).

It localises to the synapse. The protein localises to the cell projection. It is found in the dendrite. Its subcellular location is the postsynaptic density. Its function is as follows. Potent and specific inhibitor of CaM-kinase II (CAMK2). Plays a role in the maintenance of long-term retrieval-induced memory in response to contextual fear. Modulates blood pressure and vascular reactivity via regulation of CAMK2 activity in addition to regulation of left ventricular mass. Mediates the NLRP3 inflammasome in cardiomyocytes via acting as an inhibitor of the MAPK14/p38 and MAPK8/JNK pathways, thereby regulating ventricular remodeling and cardiac rhythm post-myocardial infarction. Negatively effects insulin sensitivity and promotes lipid formation in adipose tissues independent of CAMK2 signaling. This chain is Calcium/calmodulin-dependent protein kinase II inhibitor 1 (CAMK2N1), found in Bos taurus (Bovine).